Here is a 790-residue protein sequence, read N- to C-terminus: Nuclear cap-binding protein subunit 1 (790 aa).

The interval Met-1–Glu-26 is disordered. The Nuclear localization signal motif lies at Arg-3–Lys-20. Ser-7 carries the phosphoserine modification. Thr-21 carries the post-translational modification Phosphothreonine. Residues Ser-22 and Ser-201 each carry the phosphoserine modification. An MIF4G domain is found at Glu-28–Lys-240. Lys-204 bears the N6-acetyllysine mark. The stretch at Ser-643–Ile-713 forms a coiled coil. The disordered stretch occupies residues Leu-666–Asp-685. A Glycyl lysine isopeptide (Lys-Gly) (interchain with G-Cter in SUMO2) cross-link involves residue Lys-684. Residue Lys-698 is modified to N6-acetyllysine.

Belongs to the NCBP1 family. Component of the nuclear cap-binding complex (CBC), a heterodimer composed of NCBP1/CBP80 and NCBP2/CBP20 that interacts with m7GpppG-capped RNA. Found in a U snRNA export complex containing PHAX/RNUXA, NCBP1/CBP80, NCBP2/CBP20, RAN, XPO1 and m7G-capped RNA. Identified in a IGF2BP1-dependent mRNP granule complex containing untranslated mRNAs. Interacts with PHAX/RNUXA, SRRT/ARS2, EIF4G2, IGF2BP1, HNRNPF, HNRNPH1, KIAA0427/CTIF, PARN, DROSHA, UPF1 and ALYREF/THOC4. May interact with EIF4G1; the interaction is however controversial. The large PER complex involved in the repression of transcriptional termination is composed of at least PER2, CDK9, DDX5, DHX9, NCBP1/CBP80 and POLR2A (active). Component of an alternative nuclear cap-binding complex (CBC) composed of NCBP1/CBP80 and NCBP3. Interacts with METTL3. Interacts with ZFC3H1 in a RNase-insensitive manner. Interacts with MTREX. Interacts with TASOR. Interacts with DHX34; the interaction is RNA-dependent. Interacts with KPNA3. Dephosphorylated at Thr-21 by the PNUTS-PP1 complex during RNA polymerase II transcription pause-release. In terms of tissue distribution, expressed in the spermatogonia, spermatocytes and granular cells within the cerebellum.

It is found in the nucleus. The protein localises to the cytoplasm. In terms of biological role, component of the cap-binding complex (CBC), which binds cotranscriptionally to the 5'-cap of pre-mRNAs and is involved in various processes such as pre-mRNA splicing, translation regulation, nonsense-mediated mRNA decay, RNA-mediated gene silencing (RNAi) by microRNAs (miRNAs) and mRNA export. The CBC complex is involved in mRNA export from the nucleus via its interaction with ALYREF/THOC4/ALY, leading to the recruitment of the mRNA export machinery to the 5'-end of mRNA and to mRNA export in a 5' to 3' direction through the nuclear pore. The CBC complex is also involved in mediating U snRNA and intronless mRNAs export from the nucleus. The CBC complex is essential for a pioneer round of mRNA translation, before steady state translation when the CBC complex is replaced by cytoplasmic cap-binding protein eIF4E. The pioneer round of mRNA translation mediated by the CBC complex plays a central role in nonsense-mediated mRNA decay (NMD), NMD only taking place in mRNAs bound to the CBC complex, but not on eIF4E-bound mRNAs. The CBC complex enhances NMD in mRNAs containing at least one exon-junction complex (EJC) via its interaction with UPF1, promoting the interaction between UPF1 and UPF2. The CBC complex is also involved in 'failsafe' NMD, which is independent of the EJC complex, while it does not participate in Staufen-mediated mRNA decay (SMD). During cell proliferation, the CBC complex is also involved in microRNAs (miRNAs) biogenesis via its interaction with SRRT/ARS2 and is required for miRNA-mediated RNA interference. The CBC complex also acts as a negative regulator of PARN, thereby acting as an inhibitor of mRNA deadenylation. In the CBC complex, NCBP1/CBP80 does not bind directly capped RNAs (m7GpppG-capped RNA) but is required to stabilize the movement of the N-terminal loop of NCBP2/CBP20 and lock the CBC into a high affinity cap-binding state with the cap structure. Associates with NCBP3 to form an alternative cap-binding complex (CBC) which plays a key role in mRNA export and is particularly important in cellular stress situations such as virus infections. The conventional CBC with NCBP2 binds both small nuclear RNA (snRNA) and messenger (mRNA) and is involved in their export from the nucleus whereas the alternative CBC with NCBP3 does not bind snRNA and associates only with mRNA thereby playing a role only in mRNA export. NCBP1/CBP80 is required for cell growth and viability. The polypeptide is Nuclear cap-binding protein subunit 1 (Ncbp1) (Mus musculus (Mouse)).